Consider the following 132-residue polypeptide: MITIYTAPSCTSCKKAKTWLSYHHIPFNERNLIADPLSTTEISQILQKCDDGVEGLISSRNRFVKTLGVDFEDISLSQAIKIISENPQIMRRPIIMDEKRLHVGYNEEEIRAFLPRTVRVLENGGARLRSAI.

Cysteine 10 and cysteine 13 are oxidised to a cystine.

The protein belongs to the ArsC family. Spx subfamily. As to quaternary structure, interacts with the C-terminal domain of the alpha subunit of the RNAP.

It localises to the cytoplasm. Global transcriptional regulator that plays a key role in stress response and exerts either positive or negative regulation of genes. Acts by interacting with the C-terminal domain of the alpha subunit of the RNA polymerase (RNAP). This interaction can enhance binding of RNAP to the promoter region of target genes and stimulate their transcription, or block interaction of RNAP with activator. This Lactococcus lactis subsp. lactis (strain IL1403) (Streptococcus lactis) protein is Global transcriptional regulator Spx 2.